Here is a 326-residue protein sequence, read N- to C-terminus: Biotin synthase (326 aa).

The 228-residue stretch at 51-278 (NRVQVSRLIS…KSFVRLSAGR (228 aa)) folds into the Radical SAM core domain. The [4Fe-4S] cluster site is built by Cys66, Cys70, and Cys73. Cys110, Cys141, Cys201, and Arg273 together coordinate [2Fe-2S] cluster.

The protein belongs to the radical SAM superfamily. Biotin synthase family. As to quaternary structure, homodimer. [4Fe-4S] cluster serves as cofactor. [2Fe-2S] cluster is required as a cofactor.

The enzyme catalyses (4R,5S)-dethiobiotin + (sulfur carrier)-SH + 2 reduced [2Fe-2S]-[ferredoxin] + 2 S-adenosyl-L-methionine = (sulfur carrier)-H + biotin + 2 5'-deoxyadenosine + 2 L-methionine + 2 oxidized [2Fe-2S]-[ferredoxin]. It participates in cofactor biosynthesis; biotin biosynthesis; biotin from 7,8-diaminononanoate: step 2/2. In terms of biological role, catalyzes the conversion of dethiobiotin (DTB) to biotin by the insertion of a sulfur atom into dethiobiotin via a radical-based mechanism. The sequence is that of Biotin synthase from Paramagnetospirillum magneticum (strain ATCC 700264 / AMB-1) (Magnetospirillum magneticum).